The chain runs to 542 residues: uncharacterized protein (542 aa).

Residue asparagine 6 is glycosylated (N-linked (GlcNAc...) asparagine). 8 helical membrane passes run 61–81, 95–115, 139–159, 188–208, 217–237, 255–275, 298–318, and 348–368; these read FSTW…ATVV, SAVW…LSVA, SMPV…AAGV, HIVG…SLST, FYAT…LAKC, GWHP…WCMT, IALA…VLAF, and GSMA…ITAM. Residue asparagine 394 is glycosylated (N-linked (GlcNAc...) asparagine). The next 4 helical transmembrane spans lie at 402-422, 424-444, 469-489, and 500-520; these read IAVW…LGSI, AIEA…VIPI, FVNA…LMPT, and YAVV…WSGA.

The protein belongs to the amino acid-polyamine-organocation (APC) superfamily.

The protein localises to the golgi apparatus. It localises to the membrane. This is an uncharacterized protein from Schizosaccharomyces pombe (strain 972 / ATCC 24843) (Fission yeast).